Consider the following 200-residue polypeptide: MEYIYSIFIGYFFGAIPFSFFIAKLKGIDIRKTGSGNVGGTNVLRNAGAFYGALAFFFDIFKAYIAVFLVKGFGIKFMLIAGTMAVLGHCYSIFLKFKGGKGVASTFGVFLAVYPWSGLVFFGVWLFIVAVTKYVSLASMIGLIFASIFVFFAGKDFWVIFLALSLFSILRHKDNIQRLINGNERKTDVIGYFFGKGKKN.

5 consecutive transmembrane segments (helical) span residues tyrosine 3 to alanine 23, phenylalanine 50 to valine 70, isoleucine 75 to leucine 95, valine 109 to valine 129, and tyrosine 134 to glycine 154.

The protein belongs to the PlsY family. Probably interacts with PlsX.

Its subcellular location is the cell inner membrane. It catalyses the reaction an acyl phosphate + sn-glycerol 3-phosphate = a 1-acyl-sn-glycero-3-phosphate + phosphate. It functions in the pathway lipid metabolism; phospholipid metabolism. Catalyzes the transfer of an acyl group from acyl-phosphate (acyl-PO(4)) to glycerol-3-phosphate (G3P) to form lysophosphatidic acid (LPA). This enzyme utilizes acyl-phosphate as fatty acyl donor, but not acyl-CoA or acyl-ACP. In Thermosipho melanesiensis (strain DSM 12029 / CIP 104789 / BI429), this protein is Glycerol-3-phosphate acyltransferase.